The sequence spans 53 residues: Conotoxin Cal6.27 (53 aa).

An N-terminal signal peptide occupies residues 1-24 (MKLTCVLIAAMLLLAVCQLDSADA). Intrachain disulfides connect cysteine 29–cysteine 43, cysteine 36–cysteine 47, and cysteine 42–cysteine 51.

Belongs to the conotoxin O1 superfamily. As to expression, expressed by the venom duct.

The protein localises to the secreted. Functionally, probable neurotoxin. The chain is Conotoxin Cal6.27 from Californiconus californicus (California cone).